We begin with the raw amino-acid sequence, 381 residues long: Spermidine/putrescine import ATP-binding protein PotA (381 aa).

The ABC transporter domain maps to 22-252 (VELRNVFKFF…PKTSFVADFI (231 aa)). Residue 54-61 (GPSGCGKT) participates in ATP binding.

This sequence belongs to the ABC transporter superfamily. Spermidine/putrescine importer (TC 3.A.1.11.1) family. As to quaternary structure, the complex is composed of two ATP-binding proteins (PotA), two transmembrane proteins (PotB and PotC) and a solute-binding protein (PotD).

It localises to the cell inner membrane. It carries out the reaction ATP + H2O + polyamine-[polyamine-binding protein]Side 1 = ADP + phosphate + polyamineSide 2 + [polyamine-binding protein]Side 1.. Part of the ABC transporter complex PotABCD involved in spermidine/putrescine import. Responsible for energy coupling to the transport system. This is Spermidine/putrescine import ATP-binding protein PotA from Nostoc sp. (strain PCC 7120 / SAG 25.82 / UTEX 2576).